Consider the following 254-residue polypeptide: SLA class II histocompatibility antigen, DQ haplotype C alpha chain (254 aa).

An N-terminal signal peptide occupies residues 1-23 (MVPGRVLMWGALALTTVMSACGG). Residues 24–120 (EDIAADHVAS…KVPEVTVFSK (97 aa)) are alpha-1. Over 24-216 (EDIAADHVAS…IPAPMSELTE (193 aa)) the chain is Extracellular. 2 N-linked (GlcNAc...) asparagine glycosylation sites follow: asparagine 104 and asparagine 144. An Ig-like C1-type domain is found at 113 to 204 (PEVTVFSKSP…LDKPLLKHWE (92 aa)). Residues 121 to 203 (SPVILGQPNT…GLDKPLLKHW (83 aa)) form an alpha-2 region. The cysteines at positions 133 and 188 are disulfide-linked. Positions 204–216 (EPEIPAPMSELTE) are connecting peptide. The chain crosses the membrane as a helical span at residues 217–239 (TVVCALGLIVGLVGIVVGTVFII). The Cytoplasmic segment spans residues 240-254 (QGLRSGGPSRHQGSL).

Belongs to the MHC class II family.

Its subcellular location is the membrane. This chain is SLA class II histocompatibility antigen, DQ haplotype C alpha chain, found in Sus scrofa (Pig).